An 876-amino-acid chain; its full sequence is Xylosyltransferase oxt (876 aa).

Residues 1–14 (MEQSVSARWLKRYR) are Cytoplasmic-facing. Residues 15–35 (AFFLILLLIVAIQLFLAYKSL) traverse the membrane as a helical; Signal-anchor for type II membrane protein segment. At 36–876 (DIVGGGSGSG…PKSDVDALLK (841 aa)) the chain is on the lumenal side. Residues 48-67 (AAEAPASPPPPHAQARVQPP) are disordered. 4 disulfides stabilise this stretch: Cys-83–Cys-111, Cys-127–Cys-465, Cys-484–Cys-497, and Cys-486–Cys-495. Residues Asn-131 and Asn-135 are each glycosylated (N-linked (GlcNAc...) asparagine). In terms of domain architecture, WSC spans 134-228 (ANVSLGCFKD…FYAMNIYETG (95 aa)). UDP-alpha-D-xylose contacts are provided by residues Asp-283 and 312-314 (TIW). Residue Asn-342 is glycosylated (N-linked (GlcNAc...) asparagine). 415–416 (DW) is a binding site for UDP-alpha-D-xylose. Residues Ser-498 and 522-523 (RK) contribute to the UDP-alpha-D-xylose site. Residues Asn-696 and Asn-725 are each glycosylated (N-linked (GlcNAc...) asparagine). An intrachain disulfide couples Cys-842 to Cys-855.

This sequence belongs to the glycosyltransferase 14 family. XylT subfamily. The cofactor is Ca(2+). It depends on Mn(2+) as a cofactor. Requires Mg(2+) as cofactor.

The protein resides in the endoplasmic reticulum membrane. It localises to the golgi apparatus membrane. The enzyme catalyses UDP-alpha-D-xylose + L-seryl-[protein] = 3-O-(beta-D-xylosyl)-L-seryl-[protein] + UDP + H(+). It participates in glycan metabolism; chondroitin sulfate biosynthesis. The protein operates within glycan metabolism; heparan sulfate biosynthesis. Catalyzes the first step in biosynthesis of glycosaminoglycan. Transfers D-xylose from UDP-D-xylose to specific serine residues of the core protein. The polypeptide is Xylosyltransferase oxt (Drosophila melanogaster (Fruit fly)).